Reading from the N-terminus, the 314-residue chain is R2-like ligand binding oxidase (314 aa).

The Mn(2+) site is built by E68, E101, and H104. The segment at residues 71–162 is a cross-link (3-(O4'-tyrosyl)-valine (Val-Tyr)); that stretch reads VTEDIQPFMS…AAQVRASVTY (92 aa). Residue E101 participates in Fe cation binding. Fe cation contacts are provided by E167, E202, and H205.

This sequence belongs to the ribonucleoside diphosphate reductase small chain family. R2-like ligand binding oxidase subfamily. In terms of assembly, homodimer. Fe cation is required as a cofactor. Requires Mn(2+) as cofactor.

Functionally, probable oxidase that might be involved in lipid metabolism. In Mycobacterium bovis (strain ATCC BAA-935 / AF2122/97), this protein is R2-like ligand binding oxidase.